Reading from the N-terminus, the 296-residue chain is Cytidine deaminase (296 aa).

2 CMP/dCMP-type deaminase domains span residues 52 to 167 (SPVE…YLPD) and 191 to 296 (QGHD…YISL). Position 93-95 (93-95 (NQE)) interacts with substrate. His-106 provides a ligand contact to Zn(2+). Glu-108 (proton donor) is an active-site residue. Cys-133 and Cys-136 together coordinate Zn(2+).

This sequence belongs to the cytidine and deoxycytidylate deaminase family. As to quaternary structure, homodimer. Zn(2+) serves as cofactor.

The enzyme catalyses cytidine + H2O + H(+) = uridine + NH4(+). It carries out the reaction 2'-deoxycytidine + H2O + H(+) = 2'-deoxyuridine + NH4(+). This enzyme scavenges exogenous and endogenous cytidine and 2'-deoxycytidine for UMP synthesis. This chain is Cytidine deaminase, found in Mannheimia succiniciproducens (strain KCTC 0769BP / MBEL55E).